The sequence spans 333 residues: Probable tRNA pseudouridine synthase B (333 aa).

Asp66 acts as the Nucleophile in catalysis. One can recognise a PUA domain in the interval 233 to 308; that stretch reads LKKIIVKDSA…EVVEITRVIM (76 aa).

This sequence belongs to the pseudouridine synthase TruB family. Type 2 subfamily.

It catalyses the reaction uridine(55) in tRNA = pseudouridine(55) in tRNA. Functionally, could be responsible for synthesis of pseudouridine from uracil-55 in the psi GC loop of transfer RNAs. The sequence is that of Probable tRNA pseudouridine synthase B from Methanococcus maripaludis (strain C5 / ATCC BAA-1333).